The sequence spans 154 residues: Histone H2B.5 (154 aa).

Residues 1 to 25 (MAPKAEKKPAAKKVAEEEPSEKAAP) show a composition bias toward basic and acidic residues. Positions 1–62 (MAPKAEKKPA…DKKGRKKAKK (62 aa)) are disordered. Residues Lys7 and Lys39 each carry the N6-acetyllysine modification. Residue Lys150 forms a Glycyl lysine isopeptide (Lys-Gly) (interchain with G-Cter in ubiquitin) linkage.

The protein belongs to the histone H2B family. As to quaternary structure, the nucleosome is a histone octamer containing two molecules each of H2A, H2B, H3 and H4 assembled in one H3-H4 heterotetramer and two H2A-H2B heterodimers. The octamer wraps approximately 147 bp of DNA. In terms of processing, can be acetylated to form H2BK6ac and H2BK33ac. Post-translationally, monoubiquitinated to form H2BK143ub1; may give a specific tag for epigenetic transcriptional activation.

It is found in the nucleus. Its subcellular location is the chromosome. Its function is as follows. Core component of nucleosome. Nucleosomes wrap and compact DNA into chromatin, limiting DNA accessibility to the cellular machineries which require DNA as a template. Histones thereby play a central role in transcription regulation, DNA repair, DNA replication and chromosomal stability. DNA accessibility is regulated via a complex set of post-translational modifications of histones, also called histone code, and nucleosome remodeling. This Zea mays (Maize) protein is Histone H2B.5.